An 83-amino-acid chain; its full sequence is Exodeoxyribonuclease 7 small subunit (83 aa).

It belongs to the XseB family. As to quaternary structure, heterooligomer composed of large and small subunits.

It is found in the cytoplasm. The catalysed reaction is Exonucleolytic cleavage in either 5'- to 3'- or 3'- to 5'-direction to yield nucleoside 5'-phosphates.. In terms of biological role, bidirectionally degrades single-stranded DNA into large acid-insoluble oligonucleotides, which are then degraded further into small acid-soluble oligonucleotides. This Novosphingobium aromaticivorans (strain ATCC 700278 / DSM 12444 / CCUG 56034 / CIP 105152 / NBRC 16084 / F199) protein is Exodeoxyribonuclease 7 small subunit.